The sequence spans 279 residues: Cell death abnormality protein 2 (279 aa).

Residues 14 to 115 (FYFPGMSREE…EASLLAAYKK (102 aa)) enclose the SH2 domain. Residues 116–176 (PIIEVVVGTF…PANYVQIQME (61 aa)) form the SH3 1 domain. A disordered region spans residues 181-213 (RTSKGASQSSIGSSGGGAERFSSASTSSDNIEL). Over residues 202–211 (SSASTSSDNI) the composition is skewed to polar residues. One can recognise an SH3 2 domain in the interval 214–277 (QPRLPAKAKV…PHTYLRFTAV (64 aa)).

This sequence belongs to the CRK family. In terms of assembly, interacts with ced-5 (via C-terminus which contains a candidate SH3-binding, proline-rich region). Forms a ternary complex with ced-5 and ced-12. Interacts (via SH2 domain) with src-1 (when activated and phosphorylated at 'Tyr-416').

Required for cell migration and engulfment of cell corpses but not for programmed cell death/apoptosis. Has a role in the migration of the 2 gonadal distal tip cells (DTCs). Plays a role in protecting dopaminergic neurons from oxidative stress-induced degeneration. The polypeptide is Cell death abnormality protein 2 (Caenorhabditis elegans).